Here is a 118-residue protein sequence, read N- to C-terminus: Large ribosomal subunit protein bL19 (118 aa).

It belongs to the bacterial ribosomal protein bL19 family.

Its function is as follows. This protein is located at the 30S-50S ribosomal subunit interface and may play a role in the structure and function of the aminoacyl-tRNA binding site. The chain is Large ribosomal subunit protein bL19 from Wolinella succinogenes (strain ATCC 29543 / DSM 1740 / CCUG 13145 / JCM 31913 / LMG 7466 / NCTC 11488 / FDC 602W) (Vibrio succinogenes).